Reading from the N-terminus, the 756-residue chain is Rab11 family-interacting protein 3 (756 aa).

A compositionally biased stretch (pro residues) spans 1–24 (MASAPPASPPGSEPPGPDPEPGGP). Positions 1–204 (MASAPPASPP…SEPVGSQEDG (204 aa)) are disordered. The interval 2–435 (ASAPPASPPG…RLSSKKVARY (434 aa)) is important for binding to DYNC1LI1. Residues 27-39 (PGAAQLAPGPAEL) show a composition bias toward low complexity. Position 52 is a phosphoserine (Ser52). Low complexity predominate over residues 53-68 (PGLDEPAPGAAADGGA). Residues 84-94 (DPGPSAPPPRS) show a composition bias toward pro residues. Phosphoserine; by CDK1 is present on Ser102. EF-hand domains follow at residues 202-237 (EDGP…YGAE) and 234-269 (YGAE…IRNG). The Ca(2+) site is built by Asp215, Asp217, Asp219, Asp226, Asp247, Ser249, and Asp258. A phosphoserine mark is found at Ser281, Ser348, Ser488, Ser538, Ser647, and Ser648. The tract at residues 484–588 (GEQHSRLRQE…LLDEIESLTL (105 aa)) is ARF-binding domain (ABD). Residues 485–694 (EQHSRLRQEN…NGQIITLSIQ (210 aa)) are a coiled coil. A disordered region spans residues 645–664 (RSSSMGLQEYHSRARESELE). Basic and acidic residues predominate over residues 654 to 664 (YHSRARESELE). Residues 694–756 (QGAKSLFSTA…ETNPSILEVK (63 aa)) form the FIP-RBD domain.

Homodimer. Interacts with RAB11A; the interaction is direct and is required for the recruitment to endosomes. Interacts with RAB11B. Forms a ternary complex with RAB11A and dynein intermediate chain DYNC1LI1; RAB11FIP3 links RAB11A to dynein and the interaction regulates endocytic trafficking. Interacts with dynein intermediate chain and dynactin (DCTN1); the interaction activates dynein processivity. Interacts with ARF6 and EXOC7; the interaction serves for recruitment and tethering of recycling endosomes-derived vesicles to the cleavage furrow/midbody. Interacts with RACGAP1/MgcRacGAP; the interaction occurs at late telophase and is required for recruitment and tethering of recycling endosomes-derived vesicles to the cleavage furrow/midbody. Forms a complex with RAB11A and Rabin8/RAB3IP, probably a heterohexamer with two of each protein subunit, where RAB3IP and RAB11FIP3 simultaneously bind to RAB11A; the complex promotes preciliary trafficking. Forms a complex containing RAB11A, ASAP1, RAB3IP, RAP11FIP3 and ARF4; the complex promotes preciliary trafficking; the complex binds to RHO in photoreceptor cells and promotes RHO ciliary transport. Interacts with RAB11FIP4. Interacts with RAB25. Phosphorylated at Ser-102 by CDK1 during metaphase, and dephosphorylated as cells enter telophase.

It localises to the endosome membrane. Its subcellular location is the recycling endosome membrane. It is found in the cytoplasm. The protein resides in the cytoskeleton. The protein localises to the microtubule organizing center. It localises to the centrosome. Its subcellular location is the cleavage furrow. It is found in the midbody. The protein resides in the golgi apparatus membrane. The protein localises to the golgi apparatus. It localises to the trans-Golgi network membrane. Downstream effector molecule for Rab11 GTPase which is involved in endocytic trafficking, cytokinesis and intracellular ciliogenesis by participating in membrane delivery. Recruited by Rab11 to endosomes where it links Rab11 to dynein motor complex. The functional Rab11-RAB11FIP3-dynein complex regulates the movement of peripheral sorting endosomes (SE) along microtubule tracks toward the microtubule organizing center/centrosome, generating the endocytic recycling compartment (ERC) during interphase of cell cycle. Facilitates the interaction between dynein and dynactin and activates dynein processivity. Binding with ASAP1 is needed to regulate the pericentrosomal localization of recycling endosomes. The Rab11-RAB11FIP3 complex is also implicated in the transport during telophase of vesicles derived from recycling endosomes to the cleavage furrow via centrosome-anchored microtubules, where the vesicles function to deliver membrane during late cytokinesis and abscission. The recruitment of Rab11-RAB11FIP3-containing endosomes to the cleavage furrow and tethering to the midbody is co-mediated by RAB11FIP3 interaction with ARF6-exocyst and RACGAP1-MKLP1 tethering complexes. Also involved in the Rab11-Rabin8-Rab8 ciliogenesis cascade by facilitating the orderly assembly of a ciliary targeting complex containing Rab11, ASAP1, Rabin8/RAB3IP, RAB11FIP3 and ARF4, which directs preciliary vesicle trafficking to mother centriole and ciliogenesis initiation. Also promotes the activity of Rab11 and ASAP1 in the ARF4-dependent Golgi-to-cilia transport of the sensory receptor rhodopsin. Competes with WDR44 for binding to Rab11, which controls intracellular ciliogenesis pathway. May play a role in breast cancer cell motility by regulating actin cytoskeleton. The protein is Rab11 family-interacting protein 3 of Homo sapiens (Human).